A 341-amino-acid polypeptide reads, in one-letter code: Putative NADPH-dependent methylglyoxal reductase GRP2 (341 aa).

NADP(+) is bound by residues Lys40 and Tyr171.

Belongs to the NAD(P)-dependent epimerase/dehydratase family. Dihydroflavonol-4-reductase subfamily.

Its subcellular location is the cytoplasm. The enzyme catalyses (S)-lactaldehyde + NADP(+) = methylglyoxal + NADPH + H(+). In terms of biological role, catalyzes the irreversible reduction of the cytotoxic compound methylglyoxal (MG, 2-oxopropanal) to (S)-lactaldehyde. MG is synthesized via a bypath of glycolysis from dihydroxyacetone phosphate and is believed to play a role in cell cycle regulation and stress adaptation. This is Putative NADPH-dependent methylglyoxal reductase GRP2 (GRP2) from Candida albicans (strain SC5314 / ATCC MYA-2876) (Yeast).